The primary structure comprises 57 residues: DELTA-limacoditoxin(2)-Dv11 (57 aa).

Positions M1–P24 are cleaved as a signal peptide.

Belongs to the limacoditoxin-2 (cecropin-like) family. In terms of tissue distribution, expressed by the venom secretory cell of the spine. The spine is a cuticular structure containing a single large nucleated venom-secreting cell at its base. It is an independent unit capable of producing, storing and injecting venom. On the back of D.vulnerans caterpillars, spines are grouped together by 50 to 100 to form scoli, of which there are eight in D.vulnerans.

The protein localises to the secreted. Functionally, peptide that induces pain in mammals and has insecticidal, antibacterial and antiparasitic activities. Induces partially reversible paralysis in D.melanogaster when tested at high doses. Shows a moderate antiparasitic activity against the major pathogenic nematode of ruminants (H.contortus, EC(50)=30.5 uM). Has potent or moderate antibacterial activities against A.baumannii (MIC&lt;0.25 ug/mL) and S.aureus (MIC=16 ug/mL). Has no activity on the other bacteria tested, nor on the fungus C.albicans. Strongly induces the increase of intracellular calcium in mice DRG neurons, which is a proxy for neuronal activation that would occur during nociception. This increase is due to influx of extracellular calcium, suggesting that the peptide forms pore or channel in neuronal cell membranes. In addition, intraplantar injection in mice provokes nocifensive behavior, suggesting a pain-inducing activity. The chain is DELTA-limacoditoxin(2)-Dv11 from Doratifera vulnerans (Mottled cup moth).